The chain runs to 708 residues: Polyribonucleotide nucleotidyltransferase (708 aa).

Residues aspartate 485 and aspartate 491 each coordinate Mg(2+). Residues 552–611 (PKTYIMSIPPDKIRDVIGSGGKVINKIIAETGVKIDIKEDGKIFVMSEDSEGAKKALKII) enclose the KH domain. Residues 621–689 (GEIYLGKVTK…NQGRINLSRK (69 aa)) form the S1 motif domain. The interval 689–708 (KDAIKDSEKKEQNEKDVQKK) is disordered.

The protein belongs to the polyribonucleotide nucleotidyltransferase family. The cofactor is Mg(2+).

The protein localises to the cytoplasm. The enzyme catalyses RNA(n+1) + phosphate = RNA(n) + a ribonucleoside 5'-diphosphate. Its function is as follows. Involved in mRNA degradation. Catalyzes the phosphorolysis of single-stranded polyribonucleotides processively in the 3'- to 5'-direction. This chain is Polyribonucleotide nucleotidyltransferase, found in Clostridium kluyveri (strain NBRC 12016).